The chain runs to 353 residues: 2-Hydroxyacid oxidase 2 (353 aa).

The 352-residue stretch at 2–353 (PLVCLTDFRE…NQDLIQFSRL (352 aa)) folds into the FMN hydroxy acid dehydrogenase domain. FMN is bound by residues 77–79 (PTG), Ser106, and Gln128. Residue Tyr130 coordinates a 2-oxocarboxylate. Thr156 contacts FMN. An a 2-oxocarboxylate-binding site is contributed by Arg165. Residue Lys224 participates in FMN binding. Catalysis depends on His248, which acts as the Proton acceptor. Arg251 lines the a 2-oxocarboxylate pocket. FMN-binding positions include 279 to 283 (DGGIR) and 302 to 303 (GR). The Microbody targeting signal motif lies at 351–353 (SRL).

This sequence belongs to the FMN-dependent alpha-hydroxy acid dehydrogenase family. Homotetramer. It depends on FMN as a cofactor.

It localises to the peroxisome. The catalysed reaction is a (2S)-2-hydroxycarboxylate + O2 = a 2-oxocarboxylate + H2O2. It carries out the reaction 2-hydroxyhexadecanoate + O2 = 2-oxohexadecanoate + H2O2. The enzyme catalyses 2-hydroxyoctanoate + O2 = 2-oxooctanoate + H2O2. It functions in the pathway lipid metabolism; fatty acid metabolism. Oxidase that catalyzes the oxidation of medium and long chain hydroxyacids such as 2-hydroxyhexadecanoate and 2-hydroxyoctanoate, to the correspondong 2-oxoacids. Its role in the oxidation of 2-hydroxy fatty acids may contribute to the general pathway of fatty acid alpha-oxidation. Active in vitro with the artificial electron acceptor 2,6-dichlorophenolindophenol (DCIP), but O2 is believed to be the physiological electron acceptor, leading to the production of H2O2. The protein is 2-Hydroxyacid oxidase 2 (HAO2) of Bos taurus (Bovine).